A 1030-amino-acid polypeptide reads, in one-letter code: Calcium-transporting ATPase 4, plasma membrane-type (1030 aa).

The Cytoplasmic portion of the chain corresponds to 1–157; sequence MSNLLRDFEV…NRYTEKPARS (157 aa). The interval 19–30 is interaction with calmodulin; it reads ARQRWRSSVSIV. Position 28 is a phosphoserine (Ser28). Residues 158 to 178 traverse the membrane as a helical segment; sequence FLMFVWEALHDITLIILMVCA. At 179 to 196 the chain is on the lumenal side; sequence VVSIGVGVATEGFPRGMY. The helical transmembrane segment at 197 to 217 threads the bilayer; the sequence is DGTGILLSILLVVMVTAISDY. Residues 218–345 lie on the Cytoplasmic side of the membrane; sequence KQSLQFRDLD…EDETPLQVKL (128 aa). Residues 346 to 365 form a helical membrane-spanning segment; the sequence is NGVATIIGKIGLSFAVLTFV. The Lumenal segment spans residues 366–395; it reads VLCIRFVLDKATSGSFTNWSSEDALTLLDY. The chain crosses the membrane as a helical span at residues 396–413; it reads FAISVTIIVVAVPEGLPL. Residues 414 to 804 lie on the Cytoplasmic side of the membrane; the sequence is AVTLSLAFAM…RWGRAVYINI (391 aa). Asp451 serves as the catalytic 4-aspartylphosphate intermediate. Mg(2+) is bound by residues Asp749 and Asp753. A helical transmembrane segment spans residues 805–823; the sequence is QKFVQFQLTVNVVALIINF. The Lumenal portion of the chain corresponds to 824-834; that stretch reads VSACITGSAPL. Residues 835–855 traverse the membrane as a helical segment; the sequence is TAVQLLWVNMIMDTLGALALA. At 856 to 875 the chain is on the cytoplasmic side; it reads TEPPNEGLMKRAPIARTASF. Residues 876–898 traverse the membrane as a helical segment; that stretch reads ITKTMWRNIAGQSVYQLIVLGIL. Over 899–910 the chain is Lumenal; that stretch reads NFAGKSLLKLDG. Residues 911 to 932 form a helical membrane-spanning segment; sequence PDSTAVLNTVIFNSFVFCQVFN. The Cytoplasmic portion of the chain corresponds to 933–950; that stretch reads EINSREIEKINVFKGMFN. Residues 951–972 form a helical membrane-spanning segment; the sequence is SWVFTWVMTVTVVFQVIIVEFL. Over 973–982 the chain is Lumenal; the sequence is GAFASTVPLS. A helical membrane pass occupies residues 983-1004; the sequence is WQHWLLSILIGSLNMIVAVILK. The Cytoplasmic segment spans residues 1005 to 1030; sequence CVPVESRHHHDGYDLLPSGPSSSNSA.

It belongs to the cation transport ATPase (P-type) (TC 3.A.3) family. Type IIB subfamily.

It is found in the vacuole membrane. It carries out the reaction Ca(2+)(in) + ATP + H2O = Ca(2+)(out) + ADP + phosphate + H(+). Activated by calmodulin. In terms of biological role, this magnesium-dependent enzyme catalyzes the hydrolysis of ATP coupled with the translocation of calcium from the cytosol into small vacuoles. The sequence is that of Calcium-transporting ATPase 4, plasma membrane-type (ACA4) from Arabidopsis thaliana (Mouse-ear cress).